Here is a 216-residue protein sequence, read N- to C-terminus: Uracil phosphoribosyltransferase (216 aa).

Residues Arg32, Arg41, 75-78 (LGKI), and Lys77 each bind GTP. A 5-phospho-alpha-D-ribose 1-diphosphate-binding site is contributed by Arg85. GTP is bound at residue Arg102. Arg110 lines the 5-phospho-alpha-D-ribose 1-diphosphate pocket. Arg131 provides a ligand contact to GTP. 5-phospho-alpha-D-ribose 1-diphosphate is bound by residues Asp137 and 137-145 (DPMLATGGS). A D-ribose 5-phosphate-binding site is contributed by Tyr201. Uracil contacts are provided by residues Leu202 and 207–209 (GDF). Asp208 is a binding site for 5-phospho-alpha-D-ribose 1-diphosphate.

It belongs to the UPRTase family. Mg(2+) serves as cofactor.

The catalysed reaction is UMP + diphosphate = 5-phospho-alpha-D-ribose 1-diphosphate + uracil. It participates in pyrimidine metabolism; UMP biosynthesis via salvage pathway; UMP from uracil: step 1/1. Its activity is regulated as follows. Allosterically activated by GTP. In terms of biological role, catalyzes the conversion of uracil and 5-phospho-alpha-D-ribose 1-diphosphate (PRPP) to UMP and diphosphate. The chain is Uracil phosphoribosyltransferase (FUR1) from Lachancea kluyveri (Yeast).